The sequence spans 252 residues: Geranylgeranylglyceryl phosphate synthase (252 aa).

Residues Asp22 and Ser51 each contribute to the Mg(2+) site. Residues 170-176, 201-202, and 223-224 contribute to the sn-glycerol 1-phosphate site; these read YFEAGSG, GG, and GS.

It belongs to the GGGP/HepGP synthase family. Group II subfamily. Mg(2+) serves as cofactor.

It is found in the cytoplasm. The catalysed reaction is sn-glycerol 1-phosphate + (2E,6E,10E)-geranylgeranyl diphosphate = sn-3-O-(geranylgeranyl)glycerol 1-phosphate + diphosphate. Its pathway is membrane lipid metabolism; glycerophospholipid metabolism. In terms of biological role, prenyltransferase that catalyzes the transfer of the geranylgeranyl moiety of geranylgeranyl diphosphate (GGPP) to the C3 hydroxyl of sn-glycerol-1-phosphate (G1P). This reaction is the first ether-bond-formation step in the biosynthesis of archaeal membrane lipids. The polypeptide is Geranylgeranylglyceryl phosphate synthase (Thermoplasma volcanium (strain ATCC 51530 / DSM 4299 / JCM 9571 / NBRC 15438 / GSS1)).